Reading from the N-terminus, the 526-residue chain is Amine oxidase [flavin-containing] A (526 aa).

At methionine 1 the chain carries N-acetylmethionine. The Cytoplasmic portion of the chain corresponds to 1 to 497 (MTDLEKPSIT…HTFLERNLPS (497 aa)). The residue at position 383 (serine 383) is a Phosphoserine. Cysteine 406 is modified (S-8alpha-FAD cysteine). The chain crosses the membrane as a helical; Anchor for type IV membrane protein span at residues 498-518 (VPGLLKITGFSTSVALLCFVL). Residues 519–526 (YKFKQPQS) lie on the Mitochondrial intermembrane side of the membrane. An interaction with membrane phospholipid headgroups region spans residues 520 to 522 (KFK).

This sequence belongs to the flavin monoamine oxidase family. As to quaternary structure, monomer, homo- or heterodimer (containing two subunits of similar size). Each subunit contains a covalently bound flavin. Enzymatically active as monomer. The cofactor is FAD.

Its subcellular location is the mitochondrion outer membrane. It catalyses the reaction a secondary aliphatic amine + O2 + H2O = a primary amine + an aldehyde + H2O2. It carries out the reaction a primary methyl amine + O2 + H2O = an aldehyde + H2O2 + NH4(+). The catalysed reaction is serotonin + O2 + H2O = (5-hydroxyindol-3-yl)acetaldehyde + H2O2 + NH4(+). The enzyme catalyses (R)-adrenaline + O2 + H2O = (R)-3,4-dihydroxymandelaldehyde + methylamine + H2O2. It catalyses the reaction dopamine + O2 + H2O = 3,4-dihydroxyphenylacetaldehyde + H2O2 + NH4(+). It carries out the reaction tyramine + O2 + H2O = (4-hydroxyphenyl)acetaldehyde + H2O2 + NH4(+). The catalysed reaction is (R)-noradrenaline + O2 + H2O = (R)-3,4-dihydroxymandelaldehyde + H2O2 + NH4(+). The enzyme catalyses kynuramine + O2 + H2O = 3-(2-aminophenyl)-3-oxopropanal + H2O2 + NH4(+). It catalyses the reaction tryptamine + O2 + H2O = indole-3-acetaldehyde + H2O2 + NH4(+). It carries out the reaction 2-phenylethylamine + O2 + H2O = 2-phenylacetaldehyde + H2O2 + NH4(+). Functionally, catalyzes the oxidative deamination of biogenic and xenobiotic amines and has important functions in the metabolism of neuroactive and vasoactive amines in the central nervous system and peripheral tissues. Preferentially oxidizes serotonin. Also catalyzes the oxidative deamination of kynuramine to 3-(2-aminophenyl)-3-oxopropanal that can spontaneously condense to 4-hydroxyquinoline. The chain is Amine oxidase [flavin-containing] A from Mus musculus (Mouse).